A 38-amino-acid polypeptide reads, in one-letter code: Natriuretic peptide DNP (38 aa).

An intrachain disulfide couples cysteine 7 to cysteine 23. The disordered stretch occupies residues 19 to 38 (SNLGCPSLRDPRPNAPSTSA).

It belongs to the natriuretic peptide family. As to expression, expressed by the venom gland.

It is found in the secreted. Functionally, exhibits vasodilator, natriuretic and diuretic properties in animal models and human tissues. Acts by stimulating cGMP via the natriuretic peptide receptor 1 (NPR1). Is a poor agonist of the atrial natriuretic peptide receptor 2 (NPR2). Is not degraded by neutral endopeptidase (NEP/MME). Binds to atrial natriuretic peptide clearance receptor (NPR-C/NPR3), which may be responsible of the removal of DNP from the circulation. Increases calcium uptake and induces histamine release from rat peritoneal mast cells. Increases calcium-activated potassium (KCa) current in gastric antral circular smooth muscle cells by increasing cGMP production and activating inositol trisphosphate receptors (IP3Rs). In vivo, reduces both systolic and diastolic blood pressure with no effect on heart rate, when intravenously injected in conscious rabbits. This Dendroaspis angusticeps (Eastern green mamba) protein is Natriuretic peptide DNP.